Consider the following 89-residue polypeptide: Small ribosomal subunit protein bS20 (89 aa).

The segment at Met1–Lys27 is disordered. Over residues Ala7–Arg18 the composition is skewed to basic and acidic residues.

Belongs to the bacterial ribosomal protein bS20 family.

Functionally, binds directly to 16S ribosomal RNA. The protein is Small ribosomal subunit protein bS20 of Buchnera aphidicola subsp. Schizaphis graminum (strain Sg).